A 237-amino-acid polypeptide reads, in one-letter code: Protein GrpE (237 aa).

Disordered regions lie at residues 27–51 and 202–237; these read EDREAEASTSSGEASAEASQDLSET and AVSSGSPTSEPSPSDPATPKPEPESTPASPQNPQHS. Composition is skewed to low complexity over residues 33–45 and 204–213; these read ASTSSGEASAEAS and SSGSPTSEPS. The segment covering 227 to 237 has biased composition (polar residues); that stretch reads TPASPQNPQHS.

Belongs to the GrpE family. As to quaternary structure, homodimer.

The protein localises to the cytoplasm. In terms of biological role, participates actively in the response to hyperosmotic and heat shock by preventing the aggregation of stress-denatured proteins, in association with DnaK and GrpE. It is the nucleotide exchange factor for DnaK and may function as a thermosensor. Unfolded proteins bind initially to DnaJ; upon interaction with the DnaJ-bound protein, DnaK hydrolyzes its bound ATP, resulting in the formation of a stable complex. GrpE releases ADP from DnaK; ATP binding to DnaK triggers the release of the substrate protein, thus completing the reaction cycle. Several rounds of ATP-dependent interactions between DnaJ, DnaK and GrpE are required for fully efficient folding. The protein is Protein GrpE of Synechococcus sp. (strain JA-3-3Ab) (Cyanobacteria bacterium Yellowstone A-Prime).